A 975-amino-acid chain; its full sequence is Protein spalten (975 aa).

2 disordered regions span residues 1 to 31 and 64 to 99; these read MKKM…QLAQ and NLAQ…SNNN. A compositionally biased stretch (basic and acidic residues) spans 8-17; it reads NKKEKKEEQS. The stretch at 21 to 70 forms a coiled coil; that stretch reads SSLAQQHQLAQQQYQLQQQQLQLQYQQHQQQLQLAQQQKQNEQNLAQLST. In terms of domain architecture, G-alpha spans 114-458; the sequence is FCGTIMILGH…DAEKRGFTTP (345 aa). Positions 117–130 are G1 motif; that stretch reads TIMILGHTESGKTT. GTP is bound by residues 122–129, 261–267, 286–290, and 373–376; these read GHTESGKT, ISAYDQK, GCSGK, and NTSD. The tract at residues 259–267 is G2 motif; it reads DIISAYDQK. The tract at residues 282–291 is G3 motif; the sequence is VDLFGCSGKQ. The segment at 369-376 is G4 motif; it reads YLIFNTSD. The segment at 427–432 is G5 motif; it reads VNLLDK. 2 disordered regions span residues 455–520 and 541–700; these read FTTP…GSST and DNDS…VGSK. Composition is skewed to low complexity over residues 460–478, 500–515, and 544–587; these read NQSN…SRNS, LKNV…NTTT, and SSYS…NNAT. Residues 595 to 688 show a composition bias toward basic and acidic residues; the sequence is PPKEPKPVKP…DGAAESKKNG (94 aa). A PPM-type phosphatase domain is found at 704 to 972; the sequence is ESGFGSLQGR…DNITVLVVIL (269 aa). Residues D749, G750, D920, and D963 each coordinate Mn(2+).

The protein in the N-terminal section; belongs to the G-alpha family. In the C-terminal section; belongs to the PP2C family. In terms of assembly, g proteins are composed of 3 units; alpha, beta and gamma. The alpha chain contains the guanine nucleotide binding site. Requires Mg(2+) as cofactor. Mn(2+) is required as a cofactor.

The protein resides in the cytoplasm. Its subcellular location is the cytosol. It is found in the cell membrane. The enzyme catalyses O-phospho-L-seryl-[protein] + H2O = L-seryl-[protein] + phosphate. It catalyses the reaction O-phospho-L-threonyl-[protein] + H2O = L-threonyl-[protein] + phosphate. Its activity is regulated as follows. Inhibited by 50 mM NaF (sodium fluoride). Involved in cell-type differentiation and morphogenesis. Dephosphorylates casein; in vitro. May also be involved as modulators or transducers in various transmembrane signaling systems. The sequence is that of Protein spalten (spnA) from Dictyostelium discoideum (Social amoeba).